A 492-amino-acid chain; its full sequence is N-succinylglutamate 5-semialdehyde dehydrogenase (492 aa).

220 to 225 lines the NAD(+) pocket; that stretch reads GRANTG. Catalysis depends on residues Glu-243 and Cys-277.

It belongs to the aldehyde dehydrogenase family. AstD subfamily.

It carries out the reaction N-succinyl-L-glutamate 5-semialdehyde + NAD(+) + H2O = N-succinyl-L-glutamate + NADH + 2 H(+). It functions in the pathway amino-acid degradation; L-arginine degradation via AST pathway; L-glutamate and succinate from L-arginine: step 4/5. In terms of biological role, catalyzes the NAD-dependent reduction of succinylglutamate semialdehyde into succinylglutamate. The sequence is that of N-succinylglutamate 5-semialdehyde dehydrogenase from Shigella boydii serotype 18 (strain CDC 3083-94 / BS512).